Reading from the N-terminus, the 181-residue chain is Putative adenylate kinase (181 aa).

ATP is bound by residues Gly-10, Gly-12, Lys-13, Ser-14, and Thr-15. The interval Asn-35–Val-58 is NMP. An LID region spans residues Ser-106–Glu-116. ATP is bound by residues Arg-107 and Lys-147.

This sequence belongs to the adenylate kinase family. AK6 subfamily. Interacts with uS11. Not a structural component of 40S pre-ribosomes, but transiently interacts with them by binding to uS11.

It carries out the reaction AMP + ATP = 2 ADP. The enzyme catalyses ATP + H2O = ADP + phosphate + H(+). Its function is as follows. Broad-specificity nucleoside monophosphate (NMP) kinase that catalyzes the reversible transfer of the terminal phosphate group between nucleoside triphosphates and monophosphates. Also has ATPase activity. Involved in the late maturation steps of the 30S ribosomal particles, specifically 16S rRNA maturation. While NMP activity is not required for ribosome maturation, ATPase activity is. Associates transiently with small ribosomal subunit protein uS11. ATP hydrolysis breaks the interaction with uS11. May temporarily remove uS11 from the ribosome to enable a conformational change of the ribosomal RNA that is needed for the final maturation step of the small ribosomal subunit. The polypeptide is Putative adenylate kinase (Methanococcus maripaludis (strain C7 / ATCC BAA-1331)).